The chain runs to 476 residues: Methylenetetrahydrofolate--tRNA-(uracil-5-)-methyltransferase TrmFO (476 aa).

Gly13–Gly18 contributes to the FAD binding site. The tract at residues Pro425–Thr446 is disordered. The segment covering Ala435 to Thr446 has biased composition (basic and acidic residues).

It belongs to the MnmG family. TrmFO subfamily. FAD serves as cofactor.

Its subcellular location is the cytoplasm. It catalyses the reaction uridine(54) in tRNA + (6R)-5,10-methylene-5,6,7,8-tetrahydrofolate + NADH + H(+) = 5-methyluridine(54) in tRNA + (6S)-5,6,7,8-tetrahydrofolate + NAD(+). The enzyme catalyses uridine(54) in tRNA + (6R)-5,10-methylene-5,6,7,8-tetrahydrofolate + NADPH + H(+) = 5-methyluridine(54) in tRNA + (6S)-5,6,7,8-tetrahydrofolate + NADP(+). Catalyzes the folate-dependent formation of 5-methyl-uridine at position 54 (M-5-U54) in all tRNAs. In Rhodopseudomonas palustris (strain BisB18), this protein is Methylenetetrahydrofolate--tRNA-(uracil-5-)-methyltransferase TrmFO.